We begin with the raw amino-acid sequence, 237 residues long: Phosphoribosylaminoimidazole-succinocarboxamide synthase (237 aa).

Belongs to the SAICAR synthetase family.

The enzyme catalyses 5-amino-1-(5-phospho-D-ribosyl)imidazole-4-carboxylate + L-aspartate + ATP = (2S)-2-[5-amino-1-(5-phospho-beta-D-ribosyl)imidazole-4-carboxamido]succinate + ADP + phosphate + 2 H(+). It functions in the pathway purine metabolism; IMP biosynthesis via de novo pathway; 5-amino-1-(5-phospho-D-ribosyl)imidazole-4-carboxamide from 5-amino-1-(5-phospho-D-ribosyl)imidazole-4-carboxylate: step 1/2. The chain is Phosphoribosylaminoimidazole-succinocarboxamide synthase from Serratia proteamaculans (strain 568).